Here is a 314-residue protein sequence, read N- to C-terminus: NADH-ubiquinone oxidoreductase chain 1 (314 aa).

The next 8 helical transmembrane spans lie at 5 to 25, 78 to 98, 105 to 125, 152 to 172, 176 to 196, 227 to 247, 251 to 271, and 294 to 314; these read IMPL…VAFL, FSPV…PYLI, LGVL…MIAG, ALIL…SFYF, YVWF…SCLA, LIFL…VVIF, DIYS…FIWV, and LSLN…SLLF.

It belongs to the complex I subunit 1 family.

The protein localises to the mitochondrion inner membrane. The enzyme catalyses a ubiquinone + NADH + 5 H(+)(in) = a ubiquinol + NAD(+) + 4 H(+)(out). Core subunit of the mitochondrial membrane respiratory chain NADH dehydrogenase (Complex I) that is believed to belong to the minimal assembly required for catalysis. Complex I functions in the transfer of electrons from NADH to the respiratory chain. The immediate electron acceptor for the enzyme is believed to be ubiquinone. The protein is NADH-ubiquinone oxidoreductase chain 1 (mt:ND1) of Anopheles gambiae (African malaria mosquito).